The primary structure comprises 248 residues: 1-(5-phosphoribosyl)-5-[(5-phosphoribosylamino)methylideneamino] imidazole-4-carboxamide isomerase (248 aa).

Residue aspartate 8 is the Proton acceptor of the active site. Aspartate 129 functions as the Proton donor in the catalytic mechanism.

Belongs to the HisA/HisF family.

It is found in the cytoplasm. The enzyme catalyses 1-(5-phospho-beta-D-ribosyl)-5-[(5-phospho-beta-D-ribosylamino)methylideneamino]imidazole-4-carboxamide = 5-[(5-phospho-1-deoxy-D-ribulos-1-ylimino)methylamino]-1-(5-phospho-beta-D-ribosyl)imidazole-4-carboxamide. It functions in the pathway amino-acid biosynthesis; L-histidine biosynthesis; L-histidine from 5-phospho-alpha-D-ribose 1-diphosphate: step 4/9. The sequence is that of 1-(5-phosphoribosyl)-5-[(5-phosphoribosylamino)methylideneamino] imidazole-4-carboxamide isomerase from Rhizobium etli (strain ATCC 51251 / DSM 11541 / JCM 21823 / NBRC 15573 / CFN 42).